The following is a 305-amino-acid chain: Elongation factor Ts, mitochondrial (305 aa).

This sequence belongs to the EF-Ts family.

It localises to the mitochondrion. Associates with the EF-Tu.GDP complex and induces the exchange of GDP to GTP. It remains bound to the aminoacyl-tRNA.EF-Tu.GTP complex up to the GTP hydrolysis stage on the ribosome. In Danio rerio (Zebrafish), this protein is Elongation factor Ts, mitochondrial (tsfm).